The chain runs to 135 residues: Insoluble matrix shell protein 5 (135 aa).

The signal sequence occupies residues 1–16 (MILVVTLACLIAVVCC). 2 consecutive EF-hand domains span residues 21–56 (TDQGQISKVFKAYDIDGNNKISRVEGTMVFRDADLN) and 93–128 (IEFVEGNQGFDHFDKNRDNEISSWEFTQTWMETVRP). 10 residues coordinate Ca(2+): aspartate 34, aspartate 36, asparagine 38, lysine 40, glutamate 45, aspartate 106, asparagine 108, aspartate 110, glutamate 112, and glutamate 117.

As to expression, component of the acid-insoluble organic matrix of the calcified shell.

The protein resides in the secreted. This Ruditapes philippinarum (Japanese carpet shell) protein is Insoluble matrix shell protein 5.